The primary structure comprises 483 residues: Glutamyl-tRNA(Gln) amidotransferase subunit A (483 aa).

Active-site charge relay system residues include lysine 76 and serine 151. Serine 175 functions as the Acyl-ester intermediate in the catalytic mechanism.

Belongs to the amidase family. GatA subfamily. As to quaternary structure, heterotrimer of A, B and C subunits.

It catalyses the reaction L-glutamyl-tRNA(Gln) + L-glutamine + ATP + H2O = L-glutaminyl-tRNA(Gln) + L-glutamate + ADP + phosphate + H(+). Allows the formation of correctly charged Gln-tRNA(Gln) through the transamidation of misacylated Glu-tRNA(Gln) in organisms which lack glutaminyl-tRNA synthetase. The reaction takes place in the presence of glutamine and ATP through an activated gamma-phospho-Glu-tRNA(Gln). This is Glutamyl-tRNA(Gln) amidotransferase subunit A from Ectopseudomonas mendocina (strain ymp) (Pseudomonas mendocina).